Reading from the N-terminus, the 134-residue chain is Prefoldin subunit alpha (134 aa).

The protein belongs to the prefoldin subunit alpha family. Heterohexamer of two alpha and four beta subunits.

The protein localises to the cytoplasm. Functionally, molecular chaperone capable of stabilizing a range of proteins. Seems to fulfill an ATP-independent, HSP70-like function in archaeal de novo protein folding. The chain is Prefoldin subunit alpha from Pyrobaculum calidifontis (strain DSM 21063 / JCM 11548 / VA1).